The primary structure comprises 306 residues: MPLDPEVRNFLQVYYKANIIDFTKYQFQEIRQKVNELLAKAVPKDPVGETRDMKIKLEDYELPIRIYSPIKRTNNGLVMHFHGGAWILGSIETEDAISRILSNSCECTVISVDYRLAPEYKFPTAVYDCFNAIVWARDNAGELGIDKDKIATFGISAGGNLVAATSLLARDNKLKLTAQVPVVPFVYLDLASKSMNRYRKGYFLDINLPVDYGVKMYIRDEKDLYNPLFSPLIAEDLSNLPQAIVVTAEYDPLRDQGEAYAYRLMESGVPTLSFRVNGNVHAFLGSPRTSRQVTVMIGALLKDIFK.

Positions 82–84 (HGG) match the Involved in the stabilization of the negatively charged intermediate by the formation of the oxyanion hole motif. Active-site residues include serine 156, aspartate 251, and histidine 281.

Monomer.

The enzyme catalyses a phenyl acetate + H2O = a phenol + acetate + H(+). It carries out the reaction An aryl dialkyl phosphate + H2O = dialkyl phosphate + an aryl alcohol.. Its activity is regulated as follows. Completely inhibited by chemical modifiers that are specific to Cys (HgCl(2) and p-chloromercuribenzoic acid), His (diethyl pyrocarbonate) and Ser (diisopropyl fluorophosphate and phenylmethanesulfonyl fluoride). No significant effect with chemical modifiers specific to Lys (pyridoxal 5'-phosphate) and Arg (phenylglyoxal). Not inhibited by inhibitors of A-esterases (paraoxon) or C-esterases (physostigmine/eserine). Activity is also not effected by incubation with 5 mM divalent cations for 30 minutes at 30 degrees Celsius or with 10 mM EDTA for 60 minutes at 75 degrees Celsius. Its function is as follows. Has a broad substrate specificity. Hydrolyzes various p-nitrophenyl phosphates, aromatic esters and p-nitrophenyl fatty acids in vitro. Most active against paraoxon, phenyl acetate and p-nitrophenyl caproate (C6), respectively. Also has tributyrinase activity, but shows no hydrolytic activity toward other triacylglycerols including tricaprylin, trimyristin, tripalmitin or triolein in vitro. This chain is Arylesterase, found in Saccharolobus solfataricus (Sulfolobus solfataricus).